Reading from the N-terminus, the 476-residue chain is Ribulose bisphosphate carboxylase large chain (476 aa).

Residues asparagine 124 and threonine 174 each contribute to the substrate site. Lysine 176 acts as the Proton acceptor in catalysis. Lysine 178 is a binding site for substrate. Mg(2+) contacts are provided by lysine 202, aspartate 204, and glutamate 205. N6-carboxylysine is present on lysine 202. The Proton acceptor role is filled by histidine 295. The substrate site is built by arginine 296, histidine 328, and serine 380.

It belongs to the RuBisCO large chain family. Type I subfamily. In terms of assembly, heterohexadecamer of 8 large chains and 8 small chains; disulfide-linked. The disulfide link is formed within the large subunit homodimers. Mg(2+) is required as a cofactor. The disulfide bond which can form in the large chain dimeric partners within the hexadecamer appears to be associated with oxidative stress and protein turnover.

Its subcellular location is the carboxysome. It catalyses the reaction 2 (2R)-3-phosphoglycerate + 2 H(+) = D-ribulose 1,5-bisphosphate + CO2 + H2O. The catalysed reaction is D-ribulose 1,5-bisphosphate + O2 = 2-phosphoglycolate + (2R)-3-phosphoglycerate + 2 H(+). In terms of biological role, ruBisCO catalyzes two reactions: the carboxylation of D-ribulose 1,5-bisphosphate, the primary event in carbon dioxide fixation, as well as the oxidative fragmentation of the pentose substrate in the photorespiration process. Both reactions occur simultaneously and in competition at the same active site. The sequence is that of Ribulose bisphosphate carboxylase large chain from Cyanothece sp. (strain PCC 7425 / ATCC 29141).